Consider the following 445-residue polypeptide: Endoplasmic reticulum membrane adapter protein XK (445 aa).

The Cytoplasmic segment spans residues Met-1–Lys-2. Residues Phe-3–Tyr-23 traverse the membrane as a helical segment. Topologically, residues Leu-24 to Gln-37 are extracellular. The helical transmembrane segment at Ala-38–Val-58 threads the bilayer. Residues His-59 to Leu-68 lie on the Cytoplasmic side of the membrane. The chain crosses the membrane as a helical span at residues Val-69–Ile-89. Residues Tyr-90–Ser-140 are Extracellular-facing. At Ser-115 the chain carries Phosphoserine. The helical transmembrane segment at Val-141–Leu-161 threads the bilayer. The Cytoplasmic segment spans residues Glu-162–Phe-170. Residues Ile-171 to Ile-191 traverse the membrane as a helical segment. Over Lys-192–Tyr-207 the chain is Extracellular. A helical membrane pass occupies residues Val-208 to Phe-228. Topologically, residues Thr-229 to Ile-234 are cytoplasmic. A helical membrane pass occupies residues Trp-235–Phe-255. Over Trp-256–Thr-276 the chain is Extracellular. The chain crosses the membrane as a helical span at residues Ile-277–Val-297. The Cytoplasmic portion of the chain corresponds to Gln-298–Leu-316. A helical transmembrane segment spans residues Leu-317–Phe-337. Residues Lys-338 to Pro-348 are Extracellular-facing. Residues Leu-349–Tyr-369 form a helical membrane-spanning segment. The Cytoplasmic segment spans residues Gln-370 to Thr-445.

This sequence belongs to the XK family. In terms of assembly, heterodimer with Kell; disulfide-linked. Interacts with VPS13A.

It localises to the endoplasmic reticulum membrane. Its function is as follows. Recruits the lipid transfer protein VPS13A from lipid droplets to the endoplasmic reticulum (ER) membrane. The chain is Endoplasmic reticulum membrane adapter protein XK from Rattus norvegicus (Rat).